A 216-amino-acid polypeptide reads, in one-letter code: Glycerol-3-phosphate acyltransferase (216 aa).

Transmembrane regions (helical) follow at residues 11–31 (LVLG…FGLV), 62–82 (LALA…LVAS), 95–115 (VLAG…PIWL), 132–152 (ATAW…AALF), and 171–191 (LVLA…LAWI).

It belongs to the PlsY family. Probably interacts with PlsX.

Its subcellular location is the cell inner membrane. It carries out the reaction an acyl phosphate + sn-glycerol 3-phosphate = a 1-acyl-sn-glycero-3-phosphate + phosphate. The protein operates within lipid metabolism; phospholipid metabolism. Its function is as follows. Catalyzes the transfer of an acyl group from acyl-phosphate (acyl-PO(4)) to glycerol-3-phosphate (G3P) to form lysophosphatidic acid (LPA). This enzyme utilizes acyl-phosphate as fatty acyl donor, but not acyl-CoA or acyl-ACP. The chain is Glycerol-3-phosphate acyltransferase from Rhodospirillum rubrum (strain ATCC 11170 / ATH 1.1.1 / DSM 467 / LMG 4362 / NCIMB 8255 / S1).